A 930-amino-acid polypeptide reads, in one-letter code: Translation initiation factor IF-2 (930 aa).

Low complexity predominate over residues 50–67 (FKPAAAPKVEAKPAAPKV). 2 disordered regions span residues 50 to 217 (FKPA…SSEE) and 260 to 346 (EVVP…HELP). Composition is skewed to basic and acidic residues over residues 68-90 (SAEK…EAKP) and 110-125 (FKAE…AERR). Positions 129–141 (KGNNRDQQQNGNR) are enriched in low complexity. Composition is skewed to basic and acidic residues over residues 157–167 (RDNRRFNDQAK) and 262–295 (VPEK…DGPR). The span at 309 to 318 (NQKNSNWNNN) shows a compositional bias: low complexity. Positions 337 to 346 (VTERKFHELP) are enriched in basic and acidic residues. Residues 432 to 599 (ERPPVVTIMG…TVLLVAEIQE (168 aa)) enclose the tr-type G domain. The G1 stretch occupies residues 441–448 (GHVDHGKT). 441 to 448 (GHVDHGKT) is a binding site for GTP. Positions 466-470 (GITQH) are G2. A G3 region spans residues 487–490 (DTPG). Residues 487 to 491 (DTPGH) and 541 to 544 (NKID) each bind GTP. Residues 541-544 (NKID) form a G4 region. The G5 stretch occupies residues 577 to 579 (SAK).

It belongs to the TRAFAC class translation factor GTPase superfamily. Classic translation factor GTPase family. IF-2 subfamily.

Its subcellular location is the cytoplasm. One of the essential components for the initiation of protein synthesis. Protects formylmethionyl-tRNA from spontaneous hydrolysis and promotes its binding to the 30S ribosomal subunits. Also involved in the hydrolysis of GTP during the formation of the 70S ribosomal complex. The sequence is that of Translation initiation factor IF-2 from Streptococcus pneumoniae (strain P1031).